The following is a 161-amino-acid chain: MENEPDTICILVDADACPVKAEIYRVAERHNLPVVIVANSFIAIPREAQRVERVVVSGNLDAADDWIAEHSRPGAVVVTADIPLASRALEKGASVIAPNGRIHTQSTIGNTLATRNLIDSLRSAGEVTGGPAPFAPKDRSAFLSALDLAIVRLKRAGFHAS.

This sequence belongs to the UPF0178 family.

The chain is UPF0178 protein BR1979/BS1330_I1973 from Brucella suis biovar 1 (strain 1330).